The chain runs to 151 residues: MAARREPSSDDESYEVLDLTEYARRHHWWNRLFGRNSGPLTEKYSVATQIVMGGVSGWCAGFLFQKVGKLAATAVGGGFLLLQIASHGGYIQIDWKRVEKDVNKAKRKIKKEANKSVPEINTLIEESTDFIKKNIVVSGGFVGGFLLGLAS.

The YXXL motif lies at 14-17 (YEVL). Helical transmembrane passes span 44 to 64 (YSVA…GFLF), 71 to 91 (AATA…GGYI), and 130 to 150 (FIKK…LGLA).

It belongs to the FUN14 family.

It localises to the mitochondrion outer membrane. Functionally, acts as an activator of hypoxia-induced mitophagy, an important mechanism for mitochondrial quality control. The protein is FUN14 domain-containing protein 1 (fundc1) of Xenopus tropicalis (Western clawed frog).